Reading from the N-terminus, the 525-residue chain is ATP synthase subunit alpha (525 aa).

G171–S178 contributes to the ATP binding site.

The protein belongs to the ATPase alpha/beta chains family. As to quaternary structure, F-type ATPases have 2 components, CF(1) - the catalytic core - and CF(0) - the membrane proton channel. CF(1) has five subunits: alpha(3), beta(3), gamma(1), delta(1), epsilon(1). CF(0) has three main subunits: a(1), b(2) and c(9-12). The alpha and beta chains form an alternating ring which encloses part of the gamma chain. CF(1) is attached to CF(0) by a central stalk formed by the gamma and epsilon chains, while a peripheral stalk is formed by the delta and b chains.

It localises to the cell inner membrane. The catalysed reaction is ATP + H2O + 4 H(+)(in) = ADP + phosphate + 5 H(+)(out). Produces ATP from ADP in the presence of a proton gradient across the membrane. The alpha chain is a regulatory subunit. The chain is ATP synthase subunit alpha from Flavobacterium johnsoniae (strain ATCC 17061 / DSM 2064 / JCM 8514 / BCRC 14874 / CCUG 350202 / NBRC 14942 / NCIMB 11054 / UW101) (Cytophaga johnsonae).